The following is a 309-amino-acid chain: uncharacterized protein (309 aa).

The segment covering 1–16 has biased composition (basic residues); the sequence is MAGNSRRRGAVRKAGT. The segment at 1–70 is disordered; that stretch reads MAGNSRRRGA…AKRTEETETV (70 aa). 3 residues coordinate S-adenosyl-L-methionine: Gly261, Ile281, and Leu290.

The protein belongs to the class IV-like SAM-binding methyltransferase superfamily. RNA methyltransferase TrmH family.

This is an uncharacterized protein from Mycolicibacterium paratuberculosis (strain ATCC BAA-968 / K-10) (Mycobacterium paratuberculosis).